A 349-amino-acid polypeptide reads, in one-letter code: Peptide chain release factor 1 (349 aa).

The residue at position 233 (Gln-233) is an N5-methylglutamine.

It belongs to the prokaryotic/mitochondrial release factor family. Post-translationally, methylated by PrmC. Methylation increases the termination efficiency of RF1.

It localises to the cytoplasm. In terms of biological role, peptide chain release factor 1 directs the termination of translation in response to the peptide chain termination codons UAG and UAA. The polypeptide is Peptide chain release factor 1 (Pelotomaculum thermopropionicum (strain DSM 13744 / JCM 10971 / SI)).